Consider the following 420-residue polypeptide: Transcriptional adapter 2-beta (420 aa).

The ZZ-type zinc finger occupies 4-59 (LGKKYCVYCLAEVSPLRFRCTECQDIELCPECFSAGAEIGHHRRYHGYQLVDGGRF). Residues C9, C12, C23, C26, C32, C35, H45, and H49 each contribute to the Zn(2+) site. The 54-residue stretch at 65 to 118 (EAEGGWTSREEQLLLDAIEQFGFGNWEDMAAHVGASRTPQEVMEHYVSMYIHGN) folds into the SANT domain. The disordered stretch occupies residues 305-335 (SAEYEAARHKREKRKENKNLAGSKRGKEDGK).

As to quaternary structure, interacts with GCN5L2, SMARCA4, SMARCE1 and PAX5. Component of the TFTC-HAT complex.

It is found in the nucleus. Functionally, coactivates PAX5-dependent transcription together with either SMARCA4 or GCN5L2. In Homo sapiens (Human), this protein is Transcriptional adapter 2-beta (TADA2B).